We begin with the raw amino-acid sequence, 421 residues long: Tyrosine--tRNA ligase (421 aa).

Y42 is a binding site for L-tyrosine. Positions 47–56 match the 'HIGH' region motif; it reads CTAPSLHVGS. Positions 179 and 183 each coordinate L-tyrosine. A 'KMSKS' region motif is present at residues 239–243; that stretch reads KMGKT. Residue K242 coordinates ATP. The region spanning 354 to 419 is the S4 RNA-binding domain; the sequence is LGILAAFAKA…RKKHVLLRLA (66 aa).

It belongs to the class-I aminoacyl-tRNA synthetase family. TyrS type 1 subfamily. Homodimer.

It is found in the cytoplasm. It catalyses the reaction tRNA(Tyr) + L-tyrosine + ATP = L-tyrosyl-tRNA(Tyr) + AMP + diphosphate + H(+). In terms of biological role, catalyzes the attachment of tyrosine to tRNA(Tyr) in a two-step reaction: tyrosine is first activated by ATP to form Tyr-AMP and then transferred to the acceptor end of tRNA(Tyr). The sequence is that of Tyrosine--tRNA ligase from Beijerinckia indica subsp. indica (strain ATCC 9039 / DSM 1715 / NCIMB 8712).